We begin with the raw amino-acid sequence, 379 residues long: Type II methyltransferase M.SsoII (379 aa).

The region spanning 9–66 (IKEKRERLHMTQKEFADALGLSKYGDRTIRRWERGETKPTGAELKAVIDFPDTPPYPN) is the HTH cro/C1-type domain. The 308-residue stretch at 72–379 (YRMIDLFAGI…AEKIISTLDS (308 aa)) folds into the SAM-dependent MTase C5-type domain. Cys142 is a catalytic residue.

The protein belongs to the class I-like SAM-binding methyltransferase superfamily. C5-methyltransferase family.

The enzyme catalyses a 2'-deoxycytidine in DNA + S-adenosyl-L-methionine = a 5-methyl-2'-deoxycytidine in DNA + S-adenosyl-L-homocysteine + H(+). Functionally, a methylase that recognizes the double-stranded sequence 5'-CCNGG-3', methylates C-2 on both strands, and protects the DNA from cleavage by the SsoII endonuclease. This chain is Type II methyltransferase M.SsoII (ssoIIM), found in Shigella sonnei.